The chain runs to 149 residues: Large ribosomal subunit protein bL9 (149 aa).

The protein belongs to the bacterial ribosomal protein bL9 family.

Functionally, binds to the 23S rRNA. In Mannheimia succiniciproducens (strain KCTC 0769BP / MBEL55E), this protein is Large ribosomal subunit protein bL9.